We begin with the raw amino-acid sequence, 267 residues long: 4-hydroxy-tetrahydrodipicolinate reductase (267 aa).

NAD(+)-binding positions include 8–13 (GAAGRM) and E34. R35 is an NADP(+) binding site. NAD(+) is bound by residues 98-100 (GST) and 122-125 (APNM). Residue H155 is the Proton donor/acceptor of the active site. H156 contributes to the (S)-2,3,4,5-tetrahydrodipicolinate binding site. K159 functions as the Proton donor in the catalytic mechanism. 165–166 (GT) serves as a coordination point for (S)-2,3,4,5-tetrahydrodipicolinate.

The protein belongs to the DapB family.

The protein localises to the cytoplasm. The catalysed reaction is (S)-2,3,4,5-tetrahydrodipicolinate + NAD(+) + H2O = (2S,4S)-4-hydroxy-2,3,4,5-tetrahydrodipicolinate + NADH + H(+). It catalyses the reaction (S)-2,3,4,5-tetrahydrodipicolinate + NADP(+) + H2O = (2S,4S)-4-hydroxy-2,3,4,5-tetrahydrodipicolinate + NADPH + H(+). It functions in the pathway amino-acid biosynthesis; L-lysine biosynthesis via DAP pathway; (S)-tetrahydrodipicolinate from L-aspartate: step 4/4. Its function is as follows. Catalyzes the conversion of 4-hydroxy-tetrahydrodipicolinate (HTPA) to tetrahydrodipicolinate. This chain is 4-hydroxy-tetrahydrodipicolinate reductase, found in Citrifermentans bemidjiense (strain ATCC BAA-1014 / DSM 16622 / JCM 12645 / Bem) (Geobacter bemidjiensis).